A 124-amino-acid polypeptide reads, in one-letter code: Ribosome-binding factor A (124 aa).

The protein belongs to the RbfA family. In terms of assembly, monomer. Binds 30S ribosomal subunits, but not 50S ribosomal subunits or 70S ribosomes.

Its subcellular location is the cytoplasm. Its function is as follows. One of several proteins that assist in the late maturation steps of the functional core of the 30S ribosomal subunit. Associates with free 30S ribosomal subunits (but not with 30S subunits that are part of 70S ribosomes or polysomes). Required for efficient processing of 16S rRNA. May interact with the 5'-terminal helix region of 16S rRNA. In Thiobacillus denitrificans (strain ATCC 25259 / T1), this protein is Ribosome-binding factor A.